A 635-amino-acid chain; its full sequence is Transaminated amino acid decarboxylase (635 aa).

K588 participates in a covalent cross-link: Glycyl lysine isopeptide (Lys-Gly) (interchain with G-Cter in ubiquitin).

This sequence belongs to the TPP enzyme family. The cofactor is Mg(2+). Requires thiamine diphosphate as cofactor.

The protein localises to the cytoplasm. The enzyme catalyses 4-methyl-2-oxopentanoate + H(+) = 3-methylbutanal + CO2. It carries out the reaction (S)-3-methyl-2-oxopentanoate + H(+) = 2-methylbutanal + CO2. The catalysed reaction is indole-3-pyruvate + H(+) = indole-3-acetaldehyde + CO2. It catalyses the reaction 3-phenylpyruvate + H(+) = 2-phenylacetaldehyde + CO2. The enzyme catalyses 4-methylsulfanyl-2-oxobutanoate + H(+) = 3-methylsulfanylpropanal + CO2. It carries out the reaction 3-(4-hydroxyphenyl)pyruvate + H(+) = (4-hydroxyphenyl)acetaldehyde + CO2. It functions in the pathway amino-acid degradation; Ehrlich pathway. One of five 2-oxo acid decarboxylases (PDC1, PDC5, PDC6, ARO10, and THI3) involved in amino acid catabolism. The enzyme catalyzes the decarboxylation of amino acids, which, in a first step, have been transaminated to the corresponding 2-oxo acids (alpha-keto-acids). In a third step, the resulting aldehydes are reduced to alcohols, collectively referred to as fusel oils or alcohols. Its preferred substrates are the transaminated amino acids derived from phenylalanine (phenylpyruvate), tryptophan (3-(indol-3-yl)pyruvate), and probably tyrosine (4-hydroxyphenylpyruvate), but also isoleucine ((3S)-3-methyl-2-oxopentanoate, also alpha-keto-beta-methylvalerate) and methionine (4-methylthio-2-oxobutanoate), whereas transaminated leucine (4-methyl-2-oxopentanoate, also alpha-keto-isocaproate) is a low efficiency substrate and transaminated valine and pyruvate are no substrates. In analogy to the pyruvate decarboxylases the enzyme may in a side-reaction catalyze condensation (or carboligation) reactions leading to the formation of 2-hydroxy ketone, collectively called acyloins. The protein is Transaminated amino acid decarboxylase (ARO10) of Saccharomyces cerevisiae (strain ATCC 204508 / S288c) (Baker's yeast).